Here is a 675-residue protein sequence, read N- to C-terminus: Envelope glycoprotein (675 aa).

Residues 1–34 form the signal peptide; sequence MACSTLPKSPKDKIDPRDLLIPLILFLSLKGARS. The interval 35 to 270 is receptor-binding domain (RBD); it reads AAPGSSPHQV…RYQNLGPRVP (236 aa). Over 35–620 the chain is Extracellular; sequence AAPGSSPHQV…FNRSPWFTTL (586 aa). Asparagine 46 carries N-linked (GlcNAc...) asparagine; by host glycosylation. 5 disulfides stabilise this stretch: cysteine 80/cysteine 132, cysteine 106/cysteine 121, cysteine 107/cysteine 117, cysteine 155/cysteine 175, and cysteine 167/cysteine 180. Residue histidine 89 participates in Zn(2+) binding. Aspartate 120 contacts Zn(2+). Asparagine 202 carries an N-linked (GlcNAc...) asparagine; by host glycan. A disulfide bridge connects residues cysteine 212 and cysteine 218. A disordered region spans residues 276–323; that stretch reads VLADQLSLPRPNPLPKPAKSPPASNSTPTLISPSPTPTQPPPAGTGDR. Pro residues predominate over residues 285 to 295; sequence RPNPLPKPAKS. Over residues 296–308 the composition is skewed to low complexity; the sequence is PPASNSTPTLISP. Residues 309–318 show a composition bias toward pro residues; it reads SPTPTQPPPA. Residue asparagine 336 is glycosylated (N-linked (GlcNAc...) asparagine; by host). Disulfide bonds link cysteine 346–cysteine 349, cysteine 346–cysteine 573, cysteine 376–cysteine 430, cysteine 395–cysteine 407, cysteine 437–cysteine 450, and cysteine 565–cysteine 572. The short motif at 346–349 is the CXXC element; that stretch reads CWLC. N-linked (GlcNAc...) asparagine; by host glycans are attached at residues asparagine 368 and asparagine 375. N-linked (GlcNAc...) asparagine; by host glycans are attached at residues asparagine 408 and asparagine 444. The segment at 482–502 is fusion peptide; sequence VSLTLALLLGGLTMGGIAAGV. Residues 513 to 547 are a coiled coil; sequence QQFQQLHAAVQDDLKEVEKSITNLEKSLTSLSEVV. An immunosuppression region spans residues 548 to 564; it reads LQNRRGLDLLFLKEGGL. The CX6CC signature appears at 565–573; the sequence is CAALKEECC. A helical transmembrane segment spans residues 621 to 641; that stretch reads ISTIMGPLIILLLILLFGPCI. Residue cysteine 640 is the site of S-palmitoyl cysteine; by host attachment. At 642-675 the chain is on the cytoplasmic side; sequence LNRLVQFVKDRISVVQALVLTQQYHQLKPLEYEP. The YXXL motif; contains endocytosis signal signature appears at 665 to 668; the sequence is YHQL.

As to quaternary structure, the mature envelope protein (Env) consists of a trimer of SU-TM heterodimers attached by a labile interchain disulfide bond. Post-translationally, specific enzymatic cleavages in vivo yield mature proteins. Envelope glycoproteins are synthesized as an inactive precursor that is N-glycosylated and processed likely by host cell furin or by a furin-like protease in the Golgi to yield the mature SU and TM proteins. The cleavage site between SU and TM requires the minimal sequence [KR]-X-[KR]-R. The R-peptide is released from the C-terminus of the cytoplasmic tail of the TM protein upon particle formation as a result of proteolytic cleavage by the viral protease. Cleavage of this peptide is required for TM to become fusogenic. In terms of processing, the CXXC motif is highly conserved across a broad range of retroviral envelope proteins. It is thought to participate in the formation of a labile disulfide bond possibly with the CX6CC motif present in the transmembrane protein. Isomerization of the intersubunit disulfide bond to an SU intrachain disulfide bond is thought to occur upon receptor recognition in order to allow membrane fusion. The transmembrane protein is palmitoylated. Post-translationally, the R-peptide is palmitoylated.

The protein resides in the virion membrane. The protein localises to the host cell membrane. Its function is as follows. The surface protein (SU) attaches the virus to the host cell by binding to its receptor. This interaction triggers the refolding of the transmembrane protein (TM) and is thought to activate its fusogenic potential by unmasking its fusion peptide. Fusion occurs at the host cell plasma membrane. Functionally, the transmembrane protein (TM) acts as a class I viral fusion protein. Under the current model, the protein has at least 3 conformational states: pre-fusion native state, pre-hairpin intermediate state, and post-fusion hairpin state. During viral and target cell membrane fusion, the coiled coil regions (heptad repeats) assume a trimer-of-hairpins structure, positioning the fusion peptide in close proximity to the C-terminal region of the ectodomain. The formation of this structure appears to drive apposition and subsequent fusion of viral and target cell membranes. Membranes fusion leads to delivery of the nucleocapsid into the cytoplasm. This Mus musculus (Mouse) protein is Envelope glycoprotein (env).